The chain runs to 320 residues: Small ribosomal subunit protein uS2 (320 aa).

The tract at residues 254–320 is disordered; it reads GDAAKAALPV…APATTGPVSE (67 aa). The span at 272–282 shows a compositional bias: basic and acidic residues; that stretch reads VSAKNEAKSDD. Low complexity predominate over residues 308 to 320; the sequence is AEAAPATTGPVSE.

The protein belongs to the universal ribosomal protein uS2 family.

The chain is Small ribosomal subunit protein uS2 from Clavibacter sepedonicus (Clavibacter michiganensis subsp. sepedonicus).